Consider the following 197-residue polypeptide: ADP-ribosylation factor 1 (197 aa).

Gly-2 carries the N-myristoyl glycine lipid modification. GTP is bound by residues 24-31, 67-71, and 126-129; these read GLDAAGKT, DVGGQ, and NKQD.

Belongs to the small GTPase superfamily. Arf family.

The protein resides in the golgi apparatus. The catalysed reaction is GTP + H2O = GDP + phosphate + H(+). GTP-binding protein involved in protein trafficking; may modulate vesicle budding and uncoating within the Golgi apparatus. The chain is ADP-ribosylation factor 1 from Solanum tuberosum (Potato).